The primary structure comprises 2145 residues: U5 small nuclear ribonucleoprotein 200 kDa helicase (2145 aa).

Disordered regions lie at residues 54–82 (GDRA…AQQF) and 202–243 (DSDE…GDGH). Over residues 220–231 (SEEESEEEEGVD) the composition is skewed to acidic residues. The Helicase ATP-binding 1 domain maps to 484 to 667 (DSALRSKEHL…FLRVKPEHLH (184 aa)). 497 to 504 (APTGAGKT) contacts ATP. The DEAH box signature appears at 609–612 (DEIH). Residues 677 to 894 (PLEQQYIGVT…QMVSRLTDML (218 aa)) form the Helicase C-terminal domain. In terms of domain architecture, SEC63 1 spans 975 to 1278 (TELGRIASHF…IGAETVLPIS (304 aa)). The region spanning 1331-1506 (RTVFESNENV…WLGCSASATF (176 aa)) is the Helicase ATP-binding 2 domain. 1344–1351 (APNGSGKT) serves as a coordination point for ATP. Positions 1448 to 1451 (DDLH) match the DEAH box motif. An SEC63 2 domain is found at 1812–2124 (LNLGMIASYY…YLGADQEFDV (313 aa)).

Belongs to the helicase family. SKI2 subfamily.

The protein localises to the nucleus. The catalysed reaction is ATP + H2O = ADP + phosphate + H(+). Its function is as follows. Catalyzes the ATP-dependent unwinding of U4/U6 RNA duplices, an essential step in the assembly of a catalytically active spliceosome. Plays a role in pre-mRNA splicing. In Caenorhabditis elegans, this protein is U5 small nuclear ribonucleoprotein 200 kDa helicase.